Reading from the N-terminus, the 372-residue chain is L-selectin (372 aa).

The first 28 residues, 1–28 (MVFPWRCQSAQRGSWSFLKLWIRTLLCC), serve as a signal peptide directing secretion. A propeptide spanning residues 29–38 (DLLPHHGTHC) is cleaved from the precursor. The Extracellular portion of the chain corresponds to 39–332 (WTYHYSERSM…FSKIKEGDYN (294 aa)). The C-type lectin domain maps to 55 to 155 (KFCKHNYTDL…ACHKRKAALC (101 aa)). 10 disulfide bridges follow: C57/C155, C128/C147, C128/C160, C160/C171, C165/C180, C182/C191, C197/C241, C227/C254, C259/C303, and C289/C316. Residues N60 and N104 are each glycosylated (N-linked (GlcNAc...) asparagine). Residues E118, N120, E126, N143, and D144 each contribute to the Ca(2+) site. One can recognise an EGF-like domain in the interval 156 to 192 (YTASCQPESCNRHGECVETINNNTCICDPGYYGPQCQ). The N-linked (GlcNAc...) asparagine glycan is linked to N177. Sushi domains are found at residues 195 to 256 (IQCE…ICQV) and 257 to 318 (IQCM…ICQK). N-linked (GlcNAc...) asparagine glycans are attached at residues N226, N246, and N278. The chain crosses the membrane as a helical span at residues 333-355 (PLFIPVAVMVTAFSGLAFIIWLA). Residues 356-372 (RRLKKGKKSQERMDDPY) are Cytoplasmic-facing.

It belongs to the selectin/LECAM family. Interaction with SELPLG/PSGL1 and PODXL2 is required for promoting recruitment and rolling of leukocytes. This interaction is dependent on the sialyl Lewis X glycan modification of SELPLG and PODXL2, and tyrosine sulfation modifications of SELPLG. Sulfation on 'Tyr-51' of SELPLG is important for L-selectin binding. Post-translationally, N-glycosylated. As to expression, expressed in peripheral blood mononuclear cells (PBMC), spleen and thymus.

It localises to the cell membrane. In terms of biological role, calcium-dependent lectin that mediates cell adhesion by binding to glycoproteins on neighboring cells. Mediates the adherence of lymphocytes to endothelial cells of high endothelial venules in peripheral lymph nodes. Promotes initial tethering and rolling of leukocytes in endothelia. This chain is L-selectin (Sell), found in Rattus norvegicus (Rat).